We begin with the raw amino-acid sequence, 244 residues long: UL16-binding protein 1 (244 aa).

Residues 1–25 (MAAAASPAFLLCLPLLHLLSGWSRA) form the signal peptide. The MHC class I alpha-1 like stretch occupies residues 26–117 (GWVDTHCLCY…IQVENLIPIE (92 aa)). The cysteines at positions 50 and 66 are disulfide-linked. N-linked (GlcNAc...) asparagine glycosylation occurs at Asn-82. The interval 118 to 208 (PLTLQARMSC…MYWEQMLDPT (91 aa)) is MHC class I alpha-2 like. Residues Cys-127 and Cys-190 are joined by a disulfide bond. Residue Gly-216 is the site of GPI-anchor amidated glycine attachment. Residues 217 to 244 (TTQPKAMATTLSPWSLLIIFLCFILAGR) constitute a propeptide, removed in mature form.

The protein belongs to the MHC class I family. In terms of assembly, interacts with KLRK1/NKG2D. Does not bind to beta2-microglobulin. (Microbial infection) In CMV-infected cells, interacts with the viral glycoprotein UL16; this interaction causes ULBP1 retention in the endoplasmic reticulum and cis-Golgi and prevents binding to and activation of KLRK1/NKG2D, providing CMV with an immune evasion mechanism. Expressed in T-cells, B-cells, erythroleukemia cell lines and in a wide range of tissues including heart, brain, lung, liver, testis, lymph node, thymus, tonsil and bone marrow. Also found in fetal heart, brain, lung and liver.

The protein localises to the cell membrane. It localises to the endoplasmic reticulum. Functionally, binds and activates the KLRK1/NKG2D receptor, mediating natural killer cell cytotoxicity. In Homo sapiens (Human), this protein is UL16-binding protein 1 (ULBP1).